Here is a 358-residue protein sequence, read N- to C-terminus: Small ribosomal subunit biogenesis GTPase RsgA (358 aa).

The 159-residue stretch at 76 to 234 (STEIDRPAVA…LADSPGFNQP (159 aa)) folds into the CP-type G domain. GTP contacts are provided by residues 125-128 (NKID) and 176-184 (GPSGVGKSS). Residues Cys-259, Cys-264, His-266, and Cys-272 each contribute to the Zn(2+) site. The disordered stretch occupies residues 319-358 (TYEPKLANKKYRRPSRRGKNQDQERYENKTLQDIYNDDSE). Basic residues predominate over residues 325–336 (ANKKYRRPSRRG). The segment covering 337–348 (KNQDQERYENKT) has biased composition (basic and acidic residues).

It belongs to the TRAFAC class YlqF/YawG GTPase family. RsgA subfamily. As to quaternary structure, monomer. Associates with 30S ribosomal subunit, binds 16S rRNA. The cofactor is Zn(2+).

The protein resides in the cytoplasm. Functionally, one of several proteins that assist in the late maturation steps of the functional core of the 30S ribosomal subunit. Helps release RbfA from mature subunits. May play a role in the assembly of ribosomal proteins into the subunit. Circularly permuted GTPase that catalyzes slow GTP hydrolysis, GTPase activity is stimulated by the 30S ribosomal subunit. The sequence is that of Small ribosomal subunit biogenesis GTPase RsgA from Microcystis aeruginosa (strain NIES-843 / IAM M-2473).